The primary structure comprises 132 residues: Small ribosomal subunit protein uS8 (132 aa).

It belongs to the universal ribosomal protein uS8 family. In terms of assembly, part of the 30S ribosomal subunit. Contacts proteins S5 and S12.

Functionally, one of the primary rRNA binding proteins, it binds directly to 16S rRNA central domain where it helps coordinate assembly of the platform of the 30S subunit. The polypeptide is Small ribosomal subunit protein uS8 (Rhodopseudomonas palustris (strain HaA2)).